Reading from the N-terminus, the 167-residue chain is Respiratory supercomplex factor 1-A, mitochondrial (167 aa).

The HIG1 domain maps to 1–86 (MCSDFEEETS…TERKQRREFE (86 aa)). The next 2 helical transmembrane spans lie at 21–38 (EPLIPLGCAATCYALYRA) and 53–75 (MFRARIYAQFFTLLAVVAGGMYY). The stretch at 75-107 (YKTERKQRREFEKKVEERKAQEKRDAWLRELEA) forms a coiled coil.

The protein belongs to the RCF1 family. In terms of assembly, associates with the respiratory chain complex III/complex IV supercomplex.

Its subcellular location is the mitochondrion membrane. In terms of biological role, cytochrome c oxidase subunit which plays a role in assembly of respiratory supercomplexes. The chain is Respiratory supercomplex factor 1-A, mitochondrial (rcf1-A) from Talaromyces marneffei (strain ATCC 18224 / CBS 334.59 / QM 7333) (Penicillium marneffei).